A 505-amino-acid chain; its full sequence is GMP synthase [glutamine-hydrolyzing] (505 aa).

The region spanning 3–190 is the Glutamine amidotransferase type-1 domain; sequence KVLVVNFGGQ…LRKIARISDV (188 aa). Cysteine 80 functions as the Nucleophile in the catalytic mechanism. Active-site residues include histidine 164 and glutamate 166. One can recognise a GMPS ATP-PPase domain in the interval 191–380; that stretch reads WRPEDQITRI…LGLPEDVVYR (190 aa). ATP is bound at residue 218–224; it reads SGGVDST.

The enzyme catalyses XMP + L-glutamine + ATP + H2O = GMP + L-glutamate + AMP + diphosphate + 2 H(+). It participates in purine metabolism; GMP biosynthesis; GMP from XMP (L-Gln route): step 1/1. Its function is as follows. Catalyzes the synthesis of GMP from XMP. The chain is GMP synthase [glutamine-hydrolyzing] from Pyrobaculum aerophilum (strain ATCC 51768 / DSM 7523 / JCM 9630 / CIP 104966 / NBRC 100827 / IM2).